A 113-amino-acid chain; its full sequence is Large ribosomal subunit protein bL17 (113 aa).

Belongs to the bacterial ribosomal protein bL17 family. As to quaternary structure, part of the 50S ribosomal subunit. Contacts protein L32.

The polypeptide is Large ribosomal subunit protein bL17 (Clostridium beijerinckii (strain ATCC 51743 / NCIMB 8052) (Clostridium acetobutylicum)).